We begin with the raw amino-acid sequence, 145 residues long: MKKVLVINGPNLNLLGIREKNIYGSVSYEDVLKSISRKAQELGFEVEFFQSNHEGEIIDKIHRAYFEKVDAIIINPGAYTHYSYAIHDAIKAVNIPTIEVHISNIHAREEFRHKSVIAPACTGQISGFGIKSYIIALYALKEILD.

The active-site Proton acceptor is the Tyr-23. 3 residues coordinate substrate: Asn-75, His-81, and Asp-88. The Proton donor role is filled by His-101. Residues 102–103 and Arg-112 contribute to the substrate site; that span reads IS.

It belongs to the type-II 3-dehydroquinase family. In terms of assembly, homododecamer.

It catalyses the reaction 3-dehydroquinate = 3-dehydroshikimate + H2O. The protein operates within metabolic intermediate biosynthesis; chorismate biosynthesis; chorismate from D-erythrose 4-phosphate and phosphoenolpyruvate: step 3/7. Functionally, catalyzes a trans-dehydration via an enolate intermediate. The polypeptide is 3-dehydroquinate dehydratase (Caldicellulosiruptor bescii (strain ATCC BAA-1888 / DSM 6725 / KCTC 15123 / Z-1320) (Anaerocellum thermophilum)).